The primary structure comprises 130 residues: Putative protein ZNF815 (130 aa).

In Homo sapiens (Human), this protein is Putative protein ZNF815 (ZNF815P).